The sequence spans 292 residues: Acetylglutamate kinase (292 aa).

Substrate contacts are provided by residues 72-73 (GG), R94, and N187.

It belongs to the acetylglutamate kinase family. ArgB subfamily.

Its subcellular location is the cytoplasm. It catalyses the reaction N-acetyl-L-glutamate + ATP = N-acetyl-L-glutamyl 5-phosphate + ADP. It participates in amino-acid biosynthesis; L-arginine biosynthesis; N(2)-acetyl-L-ornithine from L-glutamate: step 2/4. Its function is as follows. Catalyzes the ATP-dependent phosphorylation of N-acetyl-L-glutamate. This chain is Acetylglutamate kinase, found in Trichodesmium erythraeum (strain IMS101).